Here is a 352-residue protein sequence, read N- to C-terminus: Galactokinase (352 aa).

17–20 is a binding site for substrate; that stretch reads EHTD. ATP is bound by residues Ser49 and 101–107; that span reads GAGLSSS. Mg(2+)-binding residues include Ser107 and Glu139. Residue Asp151 is the Proton acceptor of the active site. A substrate-binding site is contributed by Tyr200.

This sequence belongs to the GHMP kinase family. GalK subfamily. As to quaternary structure, monomer.

The protein resides in the cytoplasm. It catalyses the reaction alpha-D-galactose + ATP = alpha-D-galactose 1-phosphate + ADP + H(+). It functions in the pathway carbohydrate metabolism; galactose metabolism. Catalyzes the transfer of the gamma-phosphate of ATP to D-galactose to form alpha-D-galactose-1-phosphate (Gal-1-P). Is very specific for its substrate, since it is not able to use D-glucose, D-fructose, D-mannose, 2-deoxy-D-glucose, and D-glucosamine as substrates. In Pyrococcus furiosus (strain ATCC 43587 / DSM 3638 / JCM 8422 / Vc1), this protein is Galactokinase.